The primary structure comprises 111 residues: Viscotoxin-A3 (111 aa).

Residues 1 to 26 (MEVVRGSSLVLLVLLLGALLVSQVES) form the signal peptide. Cystine bridges form between C29–C66, C30–C58, and C42–C52. Positions 73–111 (FYCTLGCESSQCATNSNGDAEAVRCKTACSDLCQDVDDA) are cleaved as a propeptide — acidic domain.

This sequence belongs to the plant thionin (TC 1.C.44) family.

It localises to the secreted. Thionins are small plant proteins which are toxic to animal cells. They seem to exert their toxic effect at the level of the cell membrane. Their precise function is not known. This chain is Viscotoxin-A3 (THI2.1), found in Viscum album (European mistletoe).